Consider the following 674-residue polypeptide: Pannexin-2 (674 aa).

At 11-53 the chain is on the cytoplasmic side; the sequence is MATALLAGEKLRELILPGSQDDKAGALAALLLQLKLELPFDRV. The chain crosses the membrane as a helical span at residues 54–74; sequence VTIGTVLVPILLVTLVFTKNF. Residues 75–125 are Extracellular-facing; sequence AEEPIYCYTPHNFTRDQALYARGYCWTELRDALPGVDASLWPSLFEHKFLP. Asn-86 carries an N-linked (GlcNAc...) asparagine glycan. Residues 126–146 form a helical membrane-spanning segment; it reads YALLAFAAIMYVPALGWEFLA. Over 147–230 the chain is Cytoplasmic; it reads STRLTSELNF…NFLAKLYLAR (84 aa). The chain crosses the membrane as a helical span at residues 231–251; the sequence is HVLILLLSVVPISYLCTYYAT. The Extracellular portion of the chain corresponds to 252 to 295; that stretch reads QKQNEFTCALGASPDGPVGSAGPTVRVSCKLPSVQLQRIIAGVD. A helical transmembrane segment spans residues 296-316; sequence IVLLCFMNLIILVNLIHLFIF. Over 317 to 674 the chain is Cytoplasmic; the sequence is RKSNFIFDKL…PRTVVSTVEF (358 aa). Residues 394 to 408 show a composition bias toward polar residues; that stretch reads TTPTVRDSGIQTVDP. Disordered stretches follow at residues 394–426 and 485–510; these read TTPT…VVKR and AHHY…KKHT. A phosphoserine mark is found at Ser-590 and Ser-601.

It belongs to the pannexin family. As to quaternary structure, forms PANX1/PANX2-heteromeric intercellular channels on coexpression in paired Xenopus oocytes. Does not form homomeric channels. S-palmitoylated in neural stem and progenitor cells. Post-translationally, cleaved by CASP3 and CASP7 during apoptosis. Cleavage has no effect on it function. Expressed in the eye, thyroid, prostate, kidney and liver. Abundantly expressed in the CNS, including hippocampus, olfactory bulb, cortex, cerebellum. Not detected in the white matter.

The protein resides in the cell membrane. It is found in the golgi apparatus membrane. The protein localises to the endoplasmic reticulum membrane. Functionally, structural component of the gap junctions and the hemichannels. The sequence is that of Pannexin-2 (Panx2) from Rattus norvegicus (Rat).